The sequence spans 802 residues: Valine--tRNA ligase (802 aa).

Positions 45 to 55 (PTISGQLHIGH) match the 'HIGH' region motif. A 'KMSKS' region motif is present at residues 524-528 (KMSKS). Lys-527 contacts ATP.

The protein belongs to the class-I aminoacyl-tRNA synthetase family. ValS type 2 subfamily. In terms of assembly, monomer.

Its subcellular location is the cytoplasm. The enzyme catalyses tRNA(Val) + L-valine + ATP = L-valyl-tRNA(Val) + AMP + diphosphate. In terms of biological role, catalyzes the attachment of valine to tRNA(Val). As ValRS can inadvertently accommodate and process structurally similar amino acids such as threonine, to avoid such errors, it has a 'posttransfer' editing activity that hydrolyzes mischarged Thr-tRNA(Val) in a tRNA-dependent manner. The sequence is that of Valine--tRNA ligase from Ehrlichia canis (strain Jake).